A 324-amino-acid chain; its full sequence is Probable acrylyl-CoA reductase AcuI (324 aa).

NADP(+)-binding positions include Tyr41, Ser156–Val159, Ser178–Arg180, Arg198, Leu242, Ile256, Ser267, and Asn313.

It belongs to the zinc-containing alcohol dehydrogenase family. Acrylyl-CoA reductase subfamily. Homodimer.

It localises to the cytoplasm. The enzyme catalyses propanoyl-CoA + NADP(+) = acryloyl-CoA + NADPH + H(+). Probably catalyzes the NADPH-dependent reduction of acrylyl-CoA to propanoyl-CoA. In Escherichia coli (strain K12), this protein is Probable acrylyl-CoA reductase AcuI (acuI).